The chain runs to 135 residues: Probable disulfide formation protein (135 aa).

Residues 7-26 form a helical membrane-spanning segment; the sequence is SYCLYFAWLVSCIGTLMSVY. C36 and C39 are disulfide-bonded. The next 2 membrane-spanning stretches (helical) occupy residues 41-60 and 67-84; these read YQRICLFPLVVILGISAYLD and YALPLALIGFCIAIYQVC. Residues C96 and C101 are joined by a disulfide bond. The chain crosses the membrane as a helical span at residues 109–131; the sequence is GFITMPMASALAFFAIANLLIFA.

The protein belongs to the DsbB family. BdbC subfamily.

The protein localises to the cell inner membrane. Required for disulfide bond formation in some proteins. The polypeptide is Probable disulfide formation protein (Chlamydia muridarum (strain MoPn / Nigg)).